A 357-amino-acid chain; its full sequence is tRNA N6-adenosine threonylcarbamoyltransferase (357 aa).

Fe cation-binding residues include His115 and His119. Residues 137–141, Asp170, Gly183, and Asn281 each bind substrate; that span reads LASGG. Asp309 contributes to the Fe cation binding site.

It belongs to the KAE1 / TsaD family. Fe(2+) serves as cofactor.

It localises to the cytoplasm. The enzyme catalyses L-threonylcarbamoyladenylate + adenosine(37) in tRNA = N(6)-L-threonylcarbamoyladenosine(37) in tRNA + AMP + H(+). Functionally, required for the formation of a threonylcarbamoyl group on adenosine at position 37 (t(6)A37) in tRNAs that read codons beginning with adenine. Is involved in the transfer of the threonylcarbamoyl moiety of threonylcarbamoyl-AMP (TC-AMP) to the N6 group of A37, together with TsaE and TsaB. TsaD likely plays a direct catalytic role in this reaction. The protein is tRNA N6-adenosine threonylcarbamoyltransferase of Bradyrhizobium diazoefficiens (strain JCM 10833 / BCRC 13528 / IAM 13628 / NBRC 14792 / USDA 110).